A 564-amino-acid chain; its full sequence is Eukaryotic translation initiation factor 3 subunit L (564 aa).

Position 2 is an N-acetylserine (serine 2). A Phosphoserine modification is found at serine 21. A PCI domain is found at 331 to 537 (DAIRVFANIL…IHIADTKVAR (207 aa)). N6-acetyllysine occurs at positions 465 and 549.

As to quaternary structure, component of the eukaryotic translation initiation factor 3 (eIF-3) complex, which is composed of 13 subunits: EIF3A, EIF3B, EIF3C, EIF3D, EIF3E, EIF3F, EIF3G, EIF3H, EIF3I, EIF3J, EIF3K, EIF3L and EIF3M. The eIF-3 complex appears to include 3 stable modules: module A is composed of EIF3A, EIF3B, EIF3G and EIF3I; module B is composed of EIF3F, EIF3H, and EIF3M; and module C is composed of EIF3C, EIF3D, EIF3E, EIF3K and EIF3L. EIF3C of module C binds EIF3B of module A and EIF3H of module B, thereby linking the three modules. EIF3J is a labile subunit that binds to the eIF-3 complex via EIF3B. The eIF-3 complex interacts with RPS6KB1 under conditions of nutrient depletion. Mitogenic stimulation leads to binding and activation of a complex composed of MTOR and RPTOR, leading to phosphorylation and release of RPS6KB1 and binding of EIF4B to eIF-3. Interacts with RRN3.

The protein resides in the cytoplasm. In terms of biological role, component of the eukaryotic translation initiation factor 3 (eIF-3) complex, which is required for several steps in the initiation of protein synthesis. The eIF-3 complex associates with the 40S ribosome and facilitates the recruitment of eIF-1, eIF-1A, eIF-2:GTP:methionyl-tRNAi and eIF-5 to form the 43S pre-initiation complex (43S PIC). The eIF-3 complex stimulates mRNA recruitment to the 43S PIC and scanning of the mRNA for AUG recognition. The eIF-3 complex is also required for disassembly and recycling of post-termination ribosomal complexes and subsequently prevents premature joining of the 40S and 60S ribosomal subunits prior to initiation. The eIF-3 complex specifically targets and initiates translation of a subset of mRNAs involved in cell proliferation, including cell cycling, differentiation and apoptosis, and uses different modes of RNA stem-loop binding to exert either translational activation or repression. (Microbial infection) In case of FCV infection, plays a role in the ribosomal termination-reinitiation event leading to the translation of VP2. This chain is Eukaryotic translation initiation factor 3 subunit L, found in Homo sapiens (Human).